The sequence spans 183 residues: Ribosome-recycling factor (183 aa).

Positions 134 to 156 (DANDELKKHQSEMSQDEVKGHQD) are disordered.

Belongs to the RRF family.

Its subcellular location is the cytoplasm. In terms of biological role, responsible for the release of ribosomes from messenger RNA at the termination of protein biosynthesis. May increase the efficiency of translation by recycling ribosomes from one round of translation to another. This chain is Ribosome-recycling factor, found in Leptospira biflexa serovar Patoc (strain Patoc 1 / Ames).